The primary structure comprises 977 residues: Serine/threonine-protein kinase/endoribonuclease IRE1 (977 aa).

Positions 1 to 18 (MPARRLLLLLTLLLPGLG) are cleaved as a signal peptide. At 19–443 (IFGSTSTVTL…EAPVDSMLKD (425 aa)) the chain is on the lumenal side. N-linked (GlcNAc...) asparagine glycosylation occurs at Asn176. Over residues 410–419 (TSENAPTTVS) the composition is skewed to polar residues. Residues 410–434 (TSENAPTTVSRDVEEKPAHAPARPE) form a disordered region. Residues 444–464 (MATIILSTFLLIGWVAFIITY) form a helical membrane-spanning segment. Over 465-977 (PLSMHQQQQL…PQPPVTPDAL (513 aa)) the chain is Cytoplasmic. Residues 491–559 (QQQQQLPFHP…PSLEQDDGDE (69 aa)) form a disordered region. Over residues 513–552 (TSGPYSESSGTSSPSTSPRASNHSLCSGSSASKAGSSPSL) the composition is skewed to low complexity. The Protein kinase domain maps to 571 to 832 (FCPKDVLGHG…AKHVLKHPFF (262 aa)). ATP is bound by residues 577–585 (LGHGAEGTI), Lys599, and 643–645 (ELC). Catalysis depends on Asp688, which acts as the Proton acceptor. ATP contacts are provided by residues 690–693 (KPHN) and Asp711. A phosphoserine mark is found at Ser724 and Ser729. Residues 835 to 963 (LEKQLQFFQD…ERLFQPYYFH (129 aa)) enclose the KEN domain. An interacts with hydroxy-aryl-aldehyde inhibitors region spans residues 906–907 (NK). Thr973 carries the phosphothreonine modification.

The protein belongs to the protein kinase superfamily. Ser/Thr protein kinase family. Monomer. Homodimer; disulfide-linked; homodimerization takes place in response to endoplasmic reticulum stress and promotes activation of the kinase and endoribonuclease activities. Dimer formation is driven by hydrophobic interactions within the N-terminal luminal domains and stabilized by disulfide bridges. Interacts (via the luminal region) with DNAJB9/ERdj4; interaction takes place in unstressed cells and promotes recruitment of HSPA5/BiP. Interacts (via the luminal region) with HSPA5/BiP; HSPA5/BiP is a negative regulator of the unfolded protein response (UPR) that prevents homodimerization of ERN1/IRE1 and subsequent activation of the protein. Interaction with HSPA5 also competitively inhibits ERN1 interaction with MANF. Interacts with PDIA6, a negative regulator of the UPR; the interaction is direct and disrupts homodimerization. Interacts with DAB2IP (via PH domain); the interaction occurs in a endoplasmic reticulum stress-induced dependent manner and is required for subsequent recruitment of TRAF2 to ERN1/IRE1. Interacts with TAOK3 and TRAF2. Interacts with RNF13. Interacts with LACC1. Interacts (when unphosphorylated) with DDRGK1; interaction is dependent on UFM1 and takes place in response to endoplasmic reticulum stress, regulating ERN1/IRE1-alpha stability. Interacts (via N-terminus) with P4HB/PDIA1; the interaction is enhanced by phosphorylation of P4HB by FAM20C in response to endoplasmic reticulum stress and results in attenuation of ERN1 activity. Interacts with TMBIM6; this interaction inhibits ERN1 activity. Interacts (via luminal domain) with MANF (via C-terminus); the interaction is decreased in the presence of increasing concentrations of Ca(2+). Mg(2+) is required as a cofactor. In terms of processing, autophosphorylated following homodimerization. Autophosphorylation promotes activation of the endoribonuclease domain. In response to ER stress, phosphorylated at Ser-724, Ser-729 and possibly Ser-726; phosphorylation promotes oligomerization and endoribonuclease activity. Dephosphorylated at Ser-724, Ser-729 and possibly Ser-726 by RPAP2 to abort failed ER-stress adaptation and trigger apoptosis. Phosphorylated at Ser-724; in response to the ER stressor tunicamycin. Post-translationally, ADP-ribosylated by PARP16 upon ER stress, which increases both kinase and endonuclease activities. Ubiquitously expressed. High levels observed in pancreatic tissue.

Its subcellular location is the endoplasmic reticulum membrane. The catalysed reaction is L-seryl-[protein] + ATP = O-phospho-L-seryl-[protein] + ADP + H(+). The enzyme catalyses L-threonyl-[protein] + ATP = O-phospho-L-threonyl-[protein] + ADP + H(+). With respect to regulation, the kinase domain is activated by trans-autophosphorylation following homodimerization. Kinase activity is required for activation of the endoribonuclease domain. Endoribonuclease activity is specifically inhibited by hydroxy-aryl-aldehydes (HAA). Serine/threonine-protein kinase and endoribonuclease that acts as a key sensor for the endoplasmic reticulum unfolded protein response (UPR). In unstressed cells, the endoplasmic reticulum luminal domain is maintained in its inactive monomeric state by binding to the endoplasmic reticulum chaperone HSPA5/BiP. Accumulation of misfolded proteins in the endoplasmic reticulum causes release of HSPA5/BiP, allowing the luminal domain to homodimerize, promoting autophosphorylation of the kinase domain and subsequent activation of the endoribonuclease activity. The endoribonuclease activity is specific for XBP1 mRNA and excises 26 nucleotides from XBP1 mRNA. The resulting spliced transcript of XBP1 encodes a transcriptional activator protein that up-regulates expression of UPR target genes. Acts as an upstream signal for ER stress-induced GORASP2-mediated unconventional (ER/Golgi-independent) trafficking of CFTR to cell membrane by modulating the expression and localization of SEC16A. This Homo sapiens (Human) protein is Serine/threonine-protein kinase/endoribonuclease IRE1.